The sequence spans 95 residues: uncharacterized protein (95 aa).

The protein belongs to the inositol monophosphatase superfamily.

This is an uncharacterized protein from Rhizobium leguminosarum bv. phaseoli.